Reading from the N-terminus, the 220-residue chain is Adenylate kinase (220 aa).

10 to 15 (GSGKST) provides a ligand contact to ATP. Residues 30–59 (SSGDLIRKEIAEGTPLGREMQAYLARGDLI) form an NMP region. AMP is bound by residues serine 31, arginine 36, 57–59 (DLI), 83–86 (GYPR), and glutamine 90. An LID region spans residues 124–161 (GRRICPKCGAVYHVEFNPPKIPGRCDVCGAELVQREDD). Residue arginine 125 participates in ATP binding. Residues cysteine 128 and cysteine 131 each coordinate Zn(2+). 134-135 (VY) serves as a coordination point for ATP. Cysteine 148 and cysteine 151 together coordinate Zn(2+). The AMP site is built by arginine 158 and arginine 169. Glycine 197 contacts ATP.

Belongs to the adenylate kinase family. In terms of assembly, monomer.

It localises to the cytoplasm. The enzyme catalyses AMP + ATP = 2 ADP. It participates in purine metabolism; AMP biosynthesis via salvage pathway; AMP from ADP: step 1/1. Catalyzes the reversible transfer of the terminal phosphate group between ATP and AMP. Plays an important role in cellular energy homeostasis and in adenine nucleotide metabolism. The protein is Adenylate kinase of Pyrococcus furiosus (strain ATCC 43587 / DSM 3638 / JCM 8422 / Vc1).